The sequence spans 374 residues: DNA replication and repair protein RecF (374 aa).

Position 30-37 (glycine 30–threonine 37) interacts with ATP.

The protein belongs to the RecF family.

The protein resides in the cytoplasm. Its function is as follows. The RecF protein is involved in DNA metabolism; it is required for DNA replication and normal SOS inducibility. RecF binds preferentially to single-stranded, linear DNA. It also seems to bind ATP. The sequence is that of DNA replication and repair protein RecF from Lactiplantibacillus plantarum (strain ATCC BAA-793 / NCIMB 8826 / WCFS1) (Lactobacillus plantarum).